Here is a 452-residue protein sequence, read N- to C-terminus: tRNA modification GTPase MnmE (452 aa).

(6S)-5-formyl-5,6,7,8-tetrahydrofolate-binding residues include Arg21, Glu78, and Lys118. The region spanning 214–375 (GMKVVIAGRP…LREHLKKSMG (162 aa)) is the TrmE-type G domain. Asn224 provides a ligand contact to K(+). GTP is bound by residues 224–229 (NAGKSS), 243–249 (TNIAGTT), and 268–271 (DTAG). Position 228 (Ser228) interacts with Mg(2+). K(+) is bound by residues Thr243, Ile245, and Thr248. Thr249 is a Mg(2+) binding site. Lys452 serves as a coordination point for (6S)-5-formyl-5,6,7,8-tetrahydrofolate.

The protein belongs to the TRAFAC class TrmE-Era-EngA-EngB-Septin-like GTPase superfamily. TrmE GTPase family. In terms of assembly, homodimer. Heterotetramer of two MnmE and two MnmG subunits. The cofactor is K(+).

It is found in the cytoplasm. In terms of biological role, exhibits a very high intrinsic GTPase hydrolysis rate. Involved in the addition of a carboxymethylaminomethyl (cmnm) group at the wobble position (U34) of certain tRNAs, forming tRNA-cmnm(5)s(2)U34. The sequence is that of tRNA modification GTPase MnmE from Actinobacillus pleuropneumoniae serotype 3 (strain JL03).